The chain runs to 355 residues: 6-aminohexanoate-oligomer endohydrolase (355 aa).

The active-site Nucleophile is the threonine 267.

It belongs to the peptidase S58 family. In terms of assembly, heterotetramer composed of 4 alpha/beta heterodimers. In terms of processing, expressed as an inactive precursor that is cleaved autocatalytically at Asn266/Thr267 to generate an active enzyme composed of an alpha subunit and a beta subunit.

The enzyme catalyses [N-(6-aminohexanoyl)]n + H2O = [N-(6-aminohexanoyl)]n-x + [N-(6-aminohexanoyl)]x.. It functions in the pathway xenobiotic degradation; nylon-6 oligomer degradation. Involved in the degradation of nylon-6 oligomers. Degrades cyclic and linear oligomers of 6-aminohexanoate (Ahx) with a degree of polymerization greater than three by an endo-type mode. Cannot use Ahx cyclic dimer or the Ahx linear dimer. The polypeptide is 6-aminohexanoate-oligomer endohydrolase (Kocuria sp. (strain KY2)).